Reading from the N-terminus, the 84-residue chain is Toxin BmKaTx13 (84 aa).

Residues 1–19 (MNYLVMISFALLLMKGVES) form the signal peptide. Residues 21-83 (RDAYIAKPEN…VPIRVPGKCH (63 aa)) form the LCN-type CS-alpha/beta domain. Disulfide bonds link cysteine 31-cysteine 82, cysteine 35-cysteine 55, cysteine 41-cysteine 65, and cysteine 45-cysteine 67. A propeptide (removed by a carboxypeptidase) is located at residue arginine 84.

This sequence belongs to the long (4 C-C) scorpion toxin superfamily. Sodium channel inhibitor family. Alpha subfamily. In terms of tissue distribution, expressed by the venom gland.

Its subcellular location is the secreted. Its function is as follows. Alpha toxins bind voltage-independently at site-3 of sodium channels (Nav) and inhibit the inactivation of the activated channels, thereby blocking neuronal transmission. This toxin is active against mammals. This chain is Toxin BmKaTx13, found in Olivierus martensii (Manchurian scorpion).